A 63-amino-acid polypeptide reads, in one-letter code: Large ribosomal subunit protein bL28 (63 aa).

Belongs to the bacterial ribosomal protein bL28 family.

This is Large ribosomal subunit protein bL28 from Geotalea uraniireducens (strain Rf4) (Geobacter uraniireducens).